Consider the following 54-residue polypeptide: UPF0181 protein APJL_0874 (54 aa).

Belongs to the UPF0181 family.

The protein is UPF0181 protein APJL_0874 of Actinobacillus pleuropneumoniae serotype 3 (strain JL03).